A 307-amino-acid polypeptide reads, in one-letter code: Serine/threonine-protein phosphatase 4 catalytic subunit B (307 aa).

Asp-54, His-56, Asp-82, and Asn-114 together coordinate Mn(2+). Residue His-115 is the Proton donor of the active site. Residues His-164 and His-238 each contribute to the Mn(2+) site. Leu-307 bears the Leucine methyl ester mark.

Belongs to the PPP phosphatase family. PP-4 (PP-X) subfamily. As to quaternary structure, serine/threonine-protein phosphatase 4 (PP4) occurs in different assemblies of the catalytic and one or more regulatory subunits. It depends on Mn(2+) as a cofactor.

It is found in the cytoplasm. The protein resides in the cytoskeleton. Its subcellular location is the microtubule organizing center. It localises to the centrosome. It carries out the reaction O-phospho-L-seryl-[protein] + H2O = L-seryl-[protein] + phosphate. It catalyses the reaction O-phospho-L-threonyl-[protein] + H2O = L-threonyl-[protein] + phosphate. Functionally, protein phosphatase that regulates many processes such as microtubule organization at centrosomes. This Danio rerio (Zebrafish) protein is Serine/threonine-protein phosphatase 4 catalytic subunit B (ppp4cb).